The chain runs to 376 residues: 3-dehydroquinate synthase (376 aa).

Residues 115–119 (GVIGD), 139–140 (TS), lysine 152, and lysine 161 contribute to the NAD(+) site. 3 residues coordinate Zn(2+): glutamate 194, histidine 256, and histidine 275.

Belongs to the sugar phosphate cyclases superfamily. Dehydroquinate synthase family. Requires Co(2+) as cofactor. Zn(2+) is required as a cofactor. The cofactor is NAD(+).

Its subcellular location is the cytoplasm. It catalyses the reaction 7-phospho-2-dehydro-3-deoxy-D-arabino-heptonate = 3-dehydroquinate + phosphate. The protein operates within metabolic intermediate biosynthesis; chorismate biosynthesis; chorismate from D-erythrose 4-phosphate and phosphoenolpyruvate: step 2/7. In terms of biological role, catalyzes the conversion of 3-deoxy-D-arabino-heptulosonate 7-phosphate (DAHP) to dehydroquinate (DHQ). In Rhizobium johnstonii (strain DSM 114642 / LMG 32736 / 3841) (Rhizobium leguminosarum bv. viciae), this protein is 3-dehydroquinate synthase.